A 374-amino-acid chain; its full sequence is Serine/threonine-protein kinase-transforming protein mos (374 aa).

The 277-residue stretch at Val-94 to Arg-370 folds into the Protein kinase domain. ATP is bound by residues Leu-100 to Val-108 and Lys-121. Asp-229 serves as the catalytic Proton acceptor.

This sequence belongs to the protein kinase superfamily. Ser/Thr protein kinase family.

The catalysed reaction is L-seryl-[protein] + ATP = O-phospho-L-seryl-[protein] + ADP + H(+). The enzyme catalyses L-threonyl-[protein] + ATP = O-phospho-L-threonyl-[protein] + ADP + H(+). In Mus musculus (Mouse), this protein is Serine/threonine-protein kinase-transforming protein mos (V-MOS).